The primary structure comprises 216 residues: Deoxyribose-phosphate aldolase (216 aa).

The Proton donor/acceptor role is filled by aspartate 89. Lysine 153 serves as the catalytic Schiff-base intermediate with acetaldehyde. The active-site Proton donor/acceptor is the lysine 182.

The protein belongs to the DeoC/FbaB aldolase family. DeoC type 1 subfamily.

Its subcellular location is the cytoplasm. It catalyses the reaction 2-deoxy-D-ribose 5-phosphate = D-glyceraldehyde 3-phosphate + acetaldehyde. It functions in the pathway carbohydrate degradation; 2-deoxy-D-ribose 1-phosphate degradation; D-glyceraldehyde 3-phosphate and acetaldehyde from 2-deoxy-alpha-D-ribose 1-phosphate: step 2/2. Catalyzes a reversible aldol reaction between acetaldehyde and D-glyceraldehyde 3-phosphate to generate 2-deoxy-D-ribose 5-phosphate. In Treponema denticola (strain ATCC 35405 / DSM 14222 / CIP 103919 / JCM 8153 / KCTC 15104), this protein is Deoxyribose-phosphate aldolase.